The primary structure comprises 967 residues: Phosphoenolpyruvate carboxylase 1 (967 aa).

The residue at position 11 (S11) is a Phosphoserine. Residues H173 and K602 contribute to the active site. S704 carries the phosphoserine modification.

It belongs to the PEPCase type 1 family. In terms of assembly, homotetramer. Mg(2+) serves as cofactor. It depends on Mn(2+) as a cofactor. Post-translationally, the phosphorylation of Ser-11 is reversibly promoted by inorganic phosphate (Pi) deprivation. Enhanced activity by phosphorylation at pH 7.3 by lowering Km and sensitivity to inhibition by L-malate and L-aspartate, while enhancing activation by glucose 6-phosphate. In terms of tissue distribution, expressed in all plant organs, with higher levels in roots.

The protein resides in the cytoplasm. It carries out the reaction oxaloacetate + phosphate = phosphoenolpyruvate + hydrogencarbonate. With respect to regulation, by light-reversible phosphorylation. Activated by inorganic phosphate (Pi) deprivation and glucose 6-phosphate. Inhibited by L-malate and L-aspartate. Its function is as follows. Through the carboxylation of phosphoenolpyruvate (PEP) it forms oxaloacetate, a four-carbon dicarboxylic acid source for the tricarboxylic acid cycle. Contributes probably to the adaptation to inorganic phosphate (Pi) deprivation. This chain is Phosphoenolpyruvate carboxylase 1 (PPC1), found in Arabidopsis thaliana (Mouse-ear cress).